We begin with the raw amino-acid sequence, 63 residues long: Cecropin-B (63 aa).

A signal peptide spans methionine 1–glutamate 22. Arginine 62 carries the arginine amide modification.

Belongs to the cecropin family.

It is found in the secreted. Functionally, cecropins have lytic and antibacterial activity against several Gram-positive and Gram-negative bacteria. This Drosophila simulans (Fruit fly) protein is Cecropin-B (CecB).